Here is a 155-residue protein sequence, read N- to C-terminus: DNA-directed RNA polymerase 1A (155 aa).

The active site involves aspartate 88.

Belongs to the phage and mitochondrial RNA polymerase family.

It catalyses the reaction RNA(n) + a ribonucleoside 5'-triphosphate = RNA(n+1) + diphosphate. Its function is as follows. DNA-dependent RNA polymerase catalyzes the transcription of DNA into RNA using the four ribonucleoside triphosphates as substrates. The polypeptide is DNA-directed RNA polymerase 1A (RPOT1-SYL) (Nicotiana tabacum (Common tobacco)).